The sequence spans 110 residues: UPF0367 protein Syncc9605_2376 (110 aa).

It belongs to the UPF0367 family.

This Synechococcus sp. (strain CC9605) protein is UPF0367 protein Syncc9605_2376.